The following is a 414-amino-acid chain: MSARKRIVVGVAGGIAAYKACTVVRQLTEAGHSVRVVPTESALRFVGAATFEALSGNPVHTGVFTDVHEVQHVRIGQQADLVVIAPATADLLARAVAGRADDLLTATLLTARCPVLFAPAMHTEMWLHPATVDNVATLRRRGAVVLEPASGRLTGADSGPGRLPEAEEITTLAQLLLERADALPYDMAGVKALVTAGGTREPLDPVRFIGNRSSGKQGYAVARVLAQRGADVTLIAGNTAGLIDPAGVEMVHIGSATQLRDAVSKHAPDANVLVMAAAVADFRPAHVAAAKIKKGASEPSSIDLVRNDDVLAGAVRARADGQLPNMRAIVGFAAETGDANGDVLFHARAKLERKGCDLLVVNAVGENRAFEVDHNDGWLLSADGTESALEHGSKTLMATRIVDSIAAFLKSQDG.

The tract at residues 1–191 is phosphopantothenoylcysteine decarboxylase; sequence MSARKRIVVG…ALPYDMAGVK (191 aa). Positions 192–414 are phosphopantothenate--cysteine ligase; that stretch reads ALVTAGGTRE…IAAFLKSQDG (223 aa). CTP-binding positions include 275-277, Asp281, Lys291, 293-294, 308-311, Phe332, Lys350, and Lys354; these read MAA, KK, and DDVL.

It in the N-terminal section; belongs to the HFCD (homo-oligomeric flavin containing Cys decarboxylase) superfamily. The protein in the C-terminal section; belongs to the PPC synthetase family. Homododecamer. Mg(2+) is required as a cofactor. FMN serves as cofactor.

It catalyses the reaction N-[(R)-4-phosphopantothenoyl]-L-cysteine + H(+) = (R)-4'-phosphopantetheine + CO2. It carries out the reaction (R)-4'-phosphopantothenate + L-cysteine + CTP = N-[(R)-4-phosphopantothenoyl]-L-cysteine + CMP + diphosphate + H(+). It functions in the pathway cofactor biosynthesis; coenzyme A biosynthesis; CoA from (R)-pantothenate: step 2/5. The protein operates within cofactor biosynthesis; coenzyme A biosynthesis; CoA from (R)-pantothenate: step 3/5. Its activity is regulated as follows. Two related chemical scaffolds that potently inhibit the activity of the CoaB moiety of CoaBC through a cryptic allosteric site that sits in the dimer interface region of the CoaB enzyme were identified. Its function is as follows. Catalyzes two sequential steps in the biosynthesis of coenzyme A. In the first step cysteine is conjugated to 4'-phosphopantothenate to form 4-phosphopantothenoylcysteine. In the second step the latter compound is decarboxylated to form 4'-phosphopantotheine. In Mycolicibacterium smegmatis (strain ATCC 700084 / mc(2)155) (Mycobacterium smegmatis), this protein is Coenzyme A biosynthesis bifunctional protein CoaBC.